The following is a 135-amino-acid chain: Surface presentation of antigens protein SpaK (135 aa).

Belongs to the SpaK family.

Involved in a secretory pathway responsible for the surface presentation of determinants needed for the entry of Salmonella species into mammalian cells. The chain is Surface presentation of antigens protein SpaK (spaK) from Salmonella typhi.